A 535-amino-acid polypeptide reads, in one-letter code: Dimethylaniline monooxygenase [N-oxide-forming] 2 (535 aa).

A2 is subject to N-acetylalanine. FAD is bound by residues 9–13 (GAGVS), E32, 40–41 (LW), and 61–62 (NT). Residues 60-61 (TN) and 195-198 (SASD) contribute to the NADP(+) site. Residue K492 forms a Glycyl lysine isopeptide (Lys-Gly) (interchain with G-Cter in SUMO) linkage. Residues 510-530 (LSASFLMKILALVAVFVAFFS) traverse the membrane as a helical segment.

The protein belongs to the FMO family. It depends on FAD as a cofactor. Mg(2+) is required as a cofactor. As to expression, lung.

It localises to the microsome membrane. The protein resides in the endoplasmic reticulum membrane. Functionally, catalyzes the oxidative metabolism of numerous xenobiotics, including mainly therapeutic drugs and insecticides that contain a soft nucleophile, most commonly nitrogen and sulfur and participates to their bioactivation. The protein is Dimethylaniline monooxygenase [N-oxide-forming] 2 of Cavia porcellus (Guinea pig).